The primary structure comprises 244 residues: 1-(5-phosphoribosyl)-5-[(5-phosphoribosylamino)methylideneamino] imidazole-4-carboxamide isomerase (244 aa).

The active-site Proton acceptor is Asp-15. The Proton donor role is filled by Asp-136.

It belongs to the HisA/HisF family.

It localises to the cytoplasm. The catalysed reaction is 1-(5-phospho-beta-D-ribosyl)-5-[(5-phospho-beta-D-ribosylamino)methylideneamino]imidazole-4-carboxamide = 5-[(5-phospho-1-deoxy-D-ribulos-1-ylimino)methylamino]-1-(5-phospho-beta-D-ribosyl)imidazole-4-carboxamide. The protein operates within amino-acid biosynthesis; L-histidine biosynthesis; L-histidine from 5-phospho-alpha-D-ribose 1-diphosphate: step 4/9. In Dehalococcoides mccartyi (strain CBDB1), this protein is 1-(5-phosphoribosyl)-5-[(5-phosphoribosylamino)methylideneamino] imidazole-4-carboxamide isomerase.